The chain runs to 424 residues: Dihydroorotase-like protein (424 aa).

The protein belongs to the metallo-dependent hydrolases superfamily. DHOase family. PyrC' subfamily. Heterododecamer of 6 active PyrB subunits and 6 non-catalytic PyrC' subunits.

Its function is as follows. Non-functional DHOase. This chain is Dihydroorotase-like protein, found in Pseudomonas putida (Arthrobacter siderocapsulatus).